The sequence spans 65 residues: ATP synthase F(0) complex subunit 8 (65 aa).

The chain crosses the membrane as a helical span at residues 8–24 (TWLTTILSMFLALFIIF). An N6-acetyllysine; alternate modification is found at K53. K53 bears the N6-succinyllysine; alternate mark. Position 56 is an N6-acetyllysine (K56).

It belongs to the ATPase protein 8 family. In terms of assembly, component of the ATP synthase complex composed at least of ATP5F1A/subunit alpha, ATP5F1B/subunit beta, ATP5MC1/subunit c (homooctomer), MT-ATP6/subunit a, MT-ATP8/subunit 8, ATP5ME/subunit e, ATP5MF/subunit f, ATP5MG/subunit g, ATP5MK/subunit k, ATP5MJ/subunit j, ATP5F1C/subunit gamma, ATP5F1D/subunit delta, ATP5F1E/subunit epsilon, ATP5PF/subunit F6, ATP5PB/subunit b, ATP5PD/subunit d, ATP5PO/subunit OSCP. ATP synthase complex consists of a soluble F(1) head domain (subunits alpha(3) and beta(3)) - the catalytic core - and a membrane F(0) domain - the membrane proton channel (subunits c, a, 8, e, f, g, k and j). These two domains are linked by a central stalk (subunits gamma, delta, and epsilon) rotating inside the F1 region and a stationary peripheral stalk (subunits F6, b, d, and OSCP). Interacts with PRICKLE3.

It localises to the mitochondrion membrane. Its function is as follows. Subunit 8, of the mitochondrial membrane ATP synthase complex (F(1)F(0) ATP synthase or Complex V) that produces ATP from ADP in the presence of a proton gradient across the membrane which is generated by electron transport complexes of the respiratory chain. ATP synthase complex consist of a soluble F(1) head domain - the catalytic core - and a membrane F(1) domain - the membrane proton channel. These two domains are linked by a central stalk rotating inside the F(1) region and a stationary peripheral stalk. During catalysis, ATP synthesis in the catalytic domain of F(1) is coupled via a rotary mechanism of the central stalk subunits to proton translocation. In vivo, can only synthesize ATP although its ATP hydrolase activity can be activated artificially in vitro. Part of the complex F(0) domain. This Capra ibex ibex (Alpine ibex) protein is ATP synthase F(0) complex subunit 8.